A 128-amino-acid polypeptide reads, in one-letter code: Cytochrome b (128 aa).

Transmembrane regions (helical) follow at residues 25-45, 69-90, and 105-125; these read FGSMLLSCLTIQIITGFFLAI, WIMQNTHAIGXSLFFICIYIHI, and WLSGTTLLITLMATASXXMCY. Heme b is bound by residues His-75 and His-89. His-126 lines the a ubiquinone pocket.

Belongs to the cytochrome b family. As to quaternary structure, the cytochrome bc1 complex contains 3 respiratory subunits (MT-CYB, CYC1 and UQCRFS1), 2 core proteins (UQCRC1 and UQCRC2) and probably 6 low-molecular weight proteins. Requires heme b as cofactor.

It is found in the mitochondrion inner membrane. Functionally, component of the ubiquinol-cytochrome c reductase complex (complex III or cytochrome b-c1 complex) that is part of the mitochondrial respiratory chain. The b-c1 complex mediates electron transfer from ubiquinol to cytochrome c. Contributes to the generation of a proton gradient across the mitochondrial membrane that is then used for ATP synthesis. This chain is Cytochrome b (MT-CYB), found in Crotalus viridis viridis (Prairie rattlesnake).